The following is a 395-amino-acid chain: Chalcone synthase 1 (395 aa).

An N-acetylvaline modification is found at Val-2. The active site involves Cys-169.

It belongs to the thiolase-like superfamily. Chalcone/stilbene synthases family.

The catalysed reaction is (E)-4-coumaroyl-CoA + 3 malonyl-CoA + 3 H(+) = 2',4,4',6'-tetrahydroxychalcone + 3 CO2 + 4 CoA. It functions in the pathway secondary metabolite biosynthesis; flavonoid biosynthesis. The primary product of this enzyme is 4,2',4',6'-tetrahydroxychalcone (also termed naringenin-chalcone or chalcone) which can under specific conditions spontaneously isomerize into naringenin. The chain is Chalcone synthase 1 (CHS1) from Sinapis alba (White mustard).